The primary structure comprises 252 residues: Sulfate transporter CysZ (252 aa).

The next 5 membrane-spanning stretches (helical) occupy residues Phe29 to Phe49, Phe66 to Phe86, Leu141 to Leu160, Val164 to Phe186, and Ala212 to Val232.

Belongs to the CysZ family.

It localises to the cell inner membrane. Functionally, high affinity, high specificity proton-dependent sulfate transporter, which mediates sulfate uptake. Provides the sulfur source for the cysteine synthesis pathway. The protein is Sulfate transporter CysZ of Vibrio atlanticus (strain LGP32) (Vibrio splendidus (strain Mel32)).